A 1105-amino-acid chain; its full sequence is KAT8 regulatory NSL complex subunit 1 (1105 aa).

K104 is modified (N6-acetyllysine). Disordered stretches follow at residues 145 to 211 and 225 to 263; these read GQTA…CTLP and NNST…GVKL. A compositionally biased stretch (polar residues) spans 225 to 258; that stretch reads NNSTANKSSVNSMEQPALQGSSRLSPGTDSSSNL. Residue S249 is modified to Phosphoserine. K262 participates in a covalent cross-link: Glycyl lysine isopeptide (Lys-Gly) (interchain with G-Cter in SUMO2). The residue at position 268 (S268) is a Phosphoserine. The stretch at 283–314 forms a coiled coil; the sequence is RITALLRRQADIESRARRLQKRLQVVQAKQVE. K331 is covalently cross-linked (Glycyl lysine isopeptide (Lys-Gly) (interchain with G-Cter in SUMO2)). Disordered stretches follow at residues 399 to 426 and 733 to 857; these read DSDV…PEQR and TAKL…RRGE. Basic and acidic residues-rich tracts occupy residues 741–753 and 780–804; these read TRPD…HLDD and DPNH…HHTD. Over residues 827-850 the composition is skewed to low complexity; sequence STSSDSPAPASSSSQVTASTSQQP. A required for activation of KAT8 histone acetyltransferase activity region spans residues 850 to 882; sequence PVRRRRGESSFDINNIVIPMSVAATTRVEKLQY. Residues 884-1035 form the PEHE domain; the sequence is EILTPSWREV…GLDEQSVQPW (152 aa). The tract at residues 910-928 is interaction with KAT8 HAT domain; that stretch reads EDLSDAAFAALHAKCEEME. The interval 938-1034 is disordered; sequence VPPQRRGSRS…LGLDEQSVQP (97 aa). The span at 955 to 965 shows a compositional bias: polar residues; sequence TTPQLGSANPS. Residues 975–988 show a composition bias toward low complexity; the sequence is SSSHSLSEYSHGQS. 2 positions are modified to phosphoserine: S991 and S994. T1003 is modified (phosphothreonine). Over residues 1008–1019 the composition is skewed to basic and acidic residues; that stretch reads DTPRHLASEDTR. S1045 carries the post-translational modification Phosphoserine. The segment at 1058–1105 is disordered; sequence ERAARCTRRTSGSKTGRETEAAPTSPPIVPLKSRHLVAAATAQRPTHR.

Component of the NSL complex at least composed of MOF/KAT8, KANSL1, KANSL2, KANSL3, MCRS1, PHF20, OGT1/OGT, WDR5 and HCFC1. Interacts (via PEHE domain) with KAT8 (via HAT domain); the interaction is direct. Component of some MLL1/MLL complex, at least composed of the core components KMT2A/MLL1, ASH2L, HCFC1, WDR5 and RBBP5, as well as the facultative components BACC1, CHD8, E2F6, HSP70, INO80C, KANSL1, LAS1L, MAX, MCRS1, MGA, KAT8/MOF, PELP1, PHF20, PRP31, RING2, RUVB1/TIP49A, RUVB2/TIP49B, SENP3, TAF1, TAF4, TAF6, TAF7, TAF9 and TEX10. As to expression, expressed in the brain.

The protein resides in the nucleus. It localises to the chromosome. Its subcellular location is the centromere. The protein localises to the kinetochore. It is found in the mitochondrion. The protein resides in the cytoplasm. It localises to the cytoskeleton. Its subcellular location is the spindle pole. In terms of biological role, non-catalytic component of the NSL histone acetyltransferase complex, a multiprotein complex that mediates histone H4 acetylation at 'Lys-5'- and 'Lys-8' (H4K5ac and H4K8ac) at transcription start sites and promotes transcription initiation. The NSL complex also acts as a regulator of gene expression in mitochondria. In addition to its role in transcription, KANSL1 also plays an essential role in spindle assembly during mitosis. Associates with microtubule ends and contributes to microtubule stability. The polypeptide is KAT8 regulatory NSL complex subunit 1 (KANSL1) (Homo sapiens (Human)).